Here is a 425-residue protein sequence, read N- to C-terminus: Enolase (425 aa).

Position 163 (glutamine 163) interacts with (2R)-2-phosphoglycerate. Catalysis depends on glutamate 205, which acts as the Proton donor. The Mg(2+) site is built by aspartate 242, glutamate 285, and aspartate 312. The (2R)-2-phosphoglycerate site is built by lysine 337, arginine 366, serine 367, and lysine 388. Catalysis depends on lysine 337, which acts as the Proton acceptor.

This sequence belongs to the enolase family. The cofactor is Mg(2+).

It is found in the cytoplasm. The protein localises to the secreted. Its subcellular location is the cell surface. It catalyses the reaction (2R)-2-phosphoglycerate = phosphoenolpyruvate + H2O. Its pathway is carbohydrate degradation; glycolysis; pyruvate from D-glyceraldehyde 3-phosphate: step 4/5. Its function is as follows. Catalyzes the reversible conversion of 2-phosphoglycerate (2-PG) into phosphoenolpyruvate (PEP). It is essential for the degradation of carbohydrates via glycolysis. This is Enolase from Syntrophomonas wolfei subsp. wolfei (strain DSM 2245B / Goettingen).